A 424-amino-acid polypeptide reads, in one-letter code: Histidine--tRNA ligase (424 aa).

Belongs to the class-II aminoacyl-tRNA synthetase family. Homodimer.

Its subcellular location is the cytoplasm. It carries out the reaction tRNA(His) + L-histidine + ATP = L-histidyl-tRNA(His) + AMP + diphosphate + H(+). The polypeptide is Histidine--tRNA ligase (Escherichia coli O17:K52:H18 (strain UMN026 / ExPEC)).